The chain runs to 124 residues: uncharacterized protein (124 aa).

This is an uncharacterized protein from Saccharomyces cerevisiae (strain ATCC 204508 / S288c) (Baker's yeast).